Consider the following 515-residue polypeptide: Putative BTB/POZ domain-containing protein At3g49970 (515 aa).

Residues 1–63 (MLEKLSFLLH…CYDISFEINT (63 aa)) form the BTB domain. In terms of domain architecture, NPH3 spans 149–409 (DWWADDLAVL…NSDSPAPATA (261 aa)). Tyr350 is subject to Phosphotyrosine. Residues 395–417 (QENLSNSDSPAPATAEKTLSPPE) are disordered. Residues 418-452 (LSSYKNELSKLNRENQYLKLELLKVKMKFKELEKE) adopt a coiled-coil conformation. The disordered stretch occupies residues 494-515 (INPFGLKQGQTKQPKSRRHSIS).

This sequence belongs to the NPH3 family.

Its pathway is protein modification; protein ubiquitination. In terms of biological role, may act as a substrate-specific adapter of an E3 ubiquitin-protein ligase complex (CUL3-RBX1-BTB) which mediates the ubiquitination and subsequent proteasomal degradation of target proteins. The chain is Putative BTB/POZ domain-containing protein At3g49970 from Arabidopsis thaliana (Mouse-ear cress).